Here is a 121-residue protein sequence, read N- to C-terminus: Large ribosomal subunit protein uL18 (121 aa).

The protein belongs to the universal ribosomal protein uL18 family. Part of the 50S ribosomal subunit; part of the 5S rRNA/L5/L18/L25 subcomplex. Contacts the 5S and 23S rRNAs.

In terms of biological role, this is one of the proteins that bind and probably mediate the attachment of the 5S RNA into the large ribosomal subunit, where it forms part of the central protuberance. The polypeptide is Large ribosomal subunit protein uL18 (Herpetosiphon aurantiacus (strain ATCC 23779 / DSM 785 / 114-95)).